A 421-amino-acid polypeptide reads, in one-letter code: Battenin (421 aa).

Transmembrane regions (helical) follow at residues 13–35 (SFHF…SGNL), 47–67 (IILW…TFLI), 74–96 (LKIV…SVYV), 101–123 (CIAA…LSYM), and 137–157 (GTGI…AAGL). N-linked (GlcNAc...) asparagine glycosylation occurs at Asn159. A helical transmembrane segment spans residues 161-181 (TIFYMMLPTVAVYFLLFFFGL). The segment at 190 to 211 (DRTDNHNNSNNSSNNSKYTEKQ) is disordered. Positions 195 to 205 (HNNSNNSSNNS) are enriched in low complexity. Residues Asn196, Asn199, Asn200, and Asn203 are each glycosylated (N-linked (GlcNAc...) asparagine). 5 helical membrane passes run 248 to 268 (LVWF…VASV), 284 to 304 (FFIA…VLIS), 313 to 333 (IKHI…WIIQ), 338 to 358 (MVTS…LGGA), and 382 to 402 (INYA…FILV).

Belongs to the battenin family.

Its subcellular location is the lysosome membrane. In Dictyostelium discoideum (Social amoeba), this protein is Battenin (cln3).